The chain runs to 1790 residues: Cytokinesis protein sepA (1790 aa).

2 disordered regions span residues 1 to 275 and 328 to 350; these read MPTS…YLTR and GEQK…GILE. Basic and acidic residues predominate over residues 24-35; sequence ERPVEDRWDAHG. Composition is skewed to low complexity over residues 39 to 62 and 187 to 203; these read SLAP…SIQS and SHHS…SRMS. Polar residues predominate over residues 205–236; sequence DQASIHSSLSSNTRGSSYISTDGSSRTTLPSH. The region spanning 274–702 is the GBD/FH3 domain; sequence TRPRDDRVVD…YVAMDRRLPD (429 aa). Residues 328–341 are compositionally biased toward basic and acidic residues; the sequence is GEQKRKQKARETHG. Positions 724–811 form a coiled coil; that stretch reads AEARRAYDES…QRNELETREL (88 aa). The 182-residue stretch at 955-1136 folds into the FH1 domain; it reads DPEQATGLLG…NYLASQGAPS (182 aa). The span at 975–986 shows a compositional bias: basic and acidic residues; that stretch reads ADDAKDEGKPTE. 3 disordered regions span residues 975-1119, 1465-1484, and 1596-1790; these read ADDA…PPGT, NLSD…ITQR, and RAAA…PSTS. Pro residues-rich tracts occupy residues 1015–1026 and 1033–1118; these read APPPPPPPPPAH and APPP…PPPG. Residues 1141–1564 enclose the FH2 domain; it reads VMSSIRPKKK…TEASLARKRI (424 aa). Residues 1435–1566 adopt a coiled-coil conformation; sequence LQKLNVDQLR…ASLARKRINV (132 aa). Positions 1581–1613 constitute a DAD domain; it reads SPATSGAMDSLLEKLRAAAPQAKDQRDRRRRAR. The segment covering 1608-1620 has biased composition (basic residues); sequence RRRRARLKERHQV. Over residues 1644-1661 the composition is skewed to polar residues; it reads SGATDTNATDSSLLSPTI. The segment covering 1694-1710 has biased composition (basic and acidic residues); that stretch reads PDPERTRRRRESAEEER. Positions 1720–1746 are enriched in polar residues; the sequence is GATSGSKDSNDTTPLSPVTEPTSTQGE.

It belongs to the formin homology family. BNI1 subfamily.

Its function is as follows. Involved in cytokinesis. Overexpression results in growth inhibition. The sequence is that of Cytokinesis protein sepA (sepA) from Emericella nidulans (strain FGSC A4 / ATCC 38163 / CBS 112.46 / NRRL 194 / M139) (Aspergillus nidulans).